A 100-amino-acid chain; its full sequence is Small ribosomal subunit protein uS14c (100 aa).

This sequence belongs to the universal ribosomal protein uS14 family. Part of the 30S ribosomal subunit.

It is found in the plastid. Its subcellular location is the chloroplast. Functionally, binds 16S rRNA, required for the assembly of 30S particles. This is Small ribosomal subunit protein uS14c from Cryptomeria japonica (Japanese cedar).